The sequence spans 331 residues: 2-hydroxyacid dehydrogenase homolog (331 aa).

NAD(+) is bound by residues 154–155, 234–236, and D260; these read HI and TSR. R236 is a catalytic residue. Residue E265 is part of the active site. Catalysis depends on H297, which acts as the Proton donor. Residue 297-300 participates in NAD(+) binding; it reads HQAF.

This sequence belongs to the D-isomer specific 2-hydroxyacid dehydrogenase family.

This Zymomonas mobilis subsp. mobilis (strain ATCC 31821 / ZM4 / CP4) protein is 2-hydroxyacid dehydrogenase homolog (ddh).